A 334-amino-acid polypeptide reads, in one-letter code: D-alanine--D-alanine ligase (334 aa).

Residues 124 to 329 (KMWFSALGIP…FAQYLSGNIL (206 aa)) enclose the ATP-grasp domain. Residue 154-209 (ALAKWGSIFIKAASQGSSVGCYRVDSIEQLASSLEEAFTFSPYVVIEKTITARELE) participates in ATP binding. Mg(2+)-binding residues include D283, E296, and N298.

Belongs to the D-alanine--D-alanine ligase family. Mg(2+) serves as cofactor. Requires Mn(2+) as cofactor.

Its subcellular location is the cytoplasm. The catalysed reaction is 2 D-alanine + ATP = D-alanyl-D-alanine + ADP + phosphate + H(+). It functions in the pathway cell wall biogenesis; peptidoglycan biosynthesis. Functionally, cell wall formation. The chain is D-alanine--D-alanine ligase from Shewanella pealeana (strain ATCC 700345 / ANG-SQ1).